A 355-amino-acid polypeptide reads, in one-letter code: Sulfate/thiosulfate import ATP-binding protein CysA (355 aa).

The ABC transporter domain maps to 3–233 (IIINNVSKQF…PASPFVMGFI (231 aa)). 35–42 (GPSGSGKS) is an ATP binding site.

It belongs to the ABC transporter superfamily. Sulfate/tungstate importer (TC 3.A.1.6) family. As to quaternary structure, the complex is composed of two ATP-binding proteins (CysA), two transmembrane proteins (CysT and CysW) and a solute-binding protein (CysP).

Its subcellular location is the cell inner membrane. The enzyme catalyses sulfate(out) + ATP + H2O = sulfate(in) + ADP + phosphate + H(+). The catalysed reaction is thiosulfate(out) + ATP + H2O = thiosulfate(in) + ADP + phosphate + H(+). Its function is as follows. Part of the ABC transporter complex CysAWTP involved in sulfate/thiosulfate import. Responsible for energy coupling to the transport system. The polypeptide is Sulfate/thiosulfate import ATP-binding protein CysA (Synechocystis sp. (strain ATCC 27184 / PCC 6803 / Kazusa)).